The sequence spans 572 residues: Phosphoglucomutase-1 (572 aa).

Substrate-binding positions include Thr23, Arg27, 126-127 (SH), and Lys140. Residue Ser126 is the Phosphoserine intermediate of the active site. Ser126 is a Mg(2+) binding site. Asp308, Asp310, and Asp312 together coordinate Mg(2+). Residues 312 to 313 (DR), Thr373, 392 to 394 (EES), Lys405, and Arg527 contribute to the substrate site.

It belongs to the phosphohexose mutase family. Mg(2+) is required as a cofactor. In terms of processing, phosphorylated via a calcium-dependent protein kinase. Very rapidly (within 80 ms) dephosphorylated during triggered trichocyst exocytosis. O-glycosylated with a short chain of mannose residues.

Its subcellular location is the cytoplasm. The enzyme catalyses alpha-D-glucose 1-phosphate = alpha-D-glucose 6-phosphate. Functionally, may be involved in membrane fusion in exocytosis. This is Phosphoglucomutase-1 (pp63-1) from Paramecium tetraurelia.